The sequence spans 119 residues: Neuropeptide B (119 aa).

The first 21 residues, 1-21, serve as a signal peptide directing secretion; the sequence is MVRCRTLVAAALALLLTPALA. Residues 53–119 constitute a propeptide that is removed on maturation; sequence SESPALRVGT…SLHKAECQSA (67 aa).

This sequence belongs to the neuropeptide B/W family. Detected in a variety of tissues. High levels are found in the lymphoid organs, central nervous system, mammary gland and uterus.

It is found in the secreted. Its function is as follows. May be involved in the regulation of feeding, neuroendocrine system, memory and learning. May be involved in the afferent pain pathway. The sequence is that of Neuropeptide B (Npb) from Rattus norvegicus (Rat).